Reading from the N-terminus, the 792-residue chain is LPS-assembly protein LptD (792 aa).

The first 22 residues, 1–22 (MYRVLRLLPLPLSVAISLSALA), serve as a signal peptide directing secretion.

The protein belongs to the LptD family. In terms of assembly, component of the lipopolysaccharide transport and assembly complex. Interacts with LptE and LptA.

The protein resides in the cell outer membrane. Together with LptE, is involved in the assembly of lipopolysaccharide (LPS) at the surface of the outer membrane. This Xylella fastidiosa (strain 9a5c) protein is LPS-assembly protein LptD.